The following is a 100-amino-acid chain: Ribosomal processing cysteine protease Prp (100 aa).

H16 functions as the Proton donor in the catalytic mechanism. C28 functions as the Nucleophile in the catalytic mechanism.

This sequence belongs to the Prp family. In terms of assembly, homodimer.

Functionally, an essential cysteine protease that cleaves the N-terminus from ribosomal protein bL27. This is Ribosomal processing cysteine protease Prp from Mycoplasma pneumoniae (strain ATCC 29342 / M129 / Subtype 1) (Mycoplasmoides pneumoniae).